The primary structure comprises 184 residues: Photosystem I assembly protein Ycf4 (184 aa).

2 helical membrane-spanning segments follow: residues 22 to 42 and 57 to 77; these read FCWAFILFLGSLGFLLVGTSS and IIFFPQGIVMSFYGIAGLFIS.

This sequence belongs to the Ycf4 family.

The protein resides in the plastid. The protein localises to the chloroplast thylakoid membrane. Functionally, seems to be required for the assembly of the photosystem I complex. The sequence is that of Photosystem I assembly protein Ycf4 from Platanus occidentalis (Sycamore).